Reading from the N-terminus, the 259-residue chain is ATP synthase subunit b 2 (259 aa).

The chain crosses the membrane as a helical span at residues Trp5 to Tyr27.

This sequence belongs to the ATPase B chain family. F-type ATPases have 2 components, F(1) - the catalytic core - and F(0) - the membrane proton channel. F(1) has five subunits: alpha(3), beta(3), gamma(1), delta(1), epsilon(1). F(0) has three main subunits: a(1), b(2) and c(10-14). The alpha and beta chains form an alternating ring which encloses part of the gamma chain. F(1) is attached to F(0) by a central stalk formed by the gamma and epsilon chains, while a peripheral stalk is formed by the delta and b chains.

It is found in the cell inner membrane. Functionally, f(1)F(0) ATP synthase produces ATP from ADP in the presence of a proton or sodium gradient. F-type ATPases consist of two structural domains, F(1) containing the extramembraneous catalytic core and F(0) containing the membrane proton channel, linked together by a central stalk and a peripheral stalk. During catalysis, ATP synthesis in the catalytic domain of F(1) is coupled via a rotary mechanism of the central stalk subunits to proton translocation. Component of the F(0) channel, it forms part of the peripheral stalk, linking F(1) to F(0). The polypeptide is ATP synthase subunit b 2 (Syntrophotalea carbinolica (strain DSM 2380 / NBRC 103641 / GraBd1) (Pelobacter carbinolicus)).